We begin with the raw amino-acid sequence, 612 residues long: UvrABC system protein C (612 aa).

The GIY-YIG domain maps to 20–98 (THSGVYRMLD…IKQHRPKYNI (79 aa)). Residues 208 to 243 (SSVLEEISAKMYQASEDMEYEKAQVYRDQLVVLRKL) form the UVR domain.

The protein belongs to the UvrC family. In terms of assembly, interacts with UvrB in an incision complex.

The protein resides in the cytoplasm. Functionally, the UvrABC repair system catalyzes the recognition and processing of DNA lesions. UvrC both incises the 5' and 3' sides of the lesion. The N-terminal half is responsible for the 3' incision and the C-terminal half is responsible for the 5' incision. The chain is UvrABC system protein C from Francisella tularensis subsp. tularensis (strain WY96-3418).